The following is a 213-amino-acid chain: Urease accessory protein UreG (213 aa).

A GTP-binding site is contributed by 17–24 (GPVGSGKT).

This sequence belongs to the SIMIBI class G3E GTPase family. UreG subfamily. As to quaternary structure, homodimer. UreD, UreF and UreG form a complex that acts as a GTP-hydrolysis-dependent molecular chaperone, activating the urease apoprotein by helping to assemble the nickel containing metallocenter of UreC. The UreE protein probably delivers the nickel.

It is found in the cytoplasm. In terms of biological role, facilitates the functional incorporation of the urease nickel metallocenter. This process requires GTP hydrolysis, probably effectuated by UreG. In Delftia acidovorans (strain DSM 14801 / SPH-1), this protein is Urease accessory protein UreG.